The following is a 572-amino-acid chain: Proline--tRNA ligase (572 aa).

Belongs to the class-II aminoacyl-tRNA synthetase family. ProS type 1 subfamily. Homodimer.

It is found in the cytoplasm. The enzyme catalyses tRNA(Pro) + L-proline + ATP = L-prolyl-tRNA(Pro) + AMP + diphosphate. Catalyzes the attachment of proline to tRNA(Pro) in a two-step reaction: proline is first activated by ATP to form Pro-AMP and then transferred to the acceptor end of tRNA(Pro). As ProRS can inadvertently accommodate and process non-cognate amino acids such as alanine and cysteine, to avoid such errors it has two additional distinct editing activities against alanine. One activity is designated as 'pretransfer' editing and involves the tRNA(Pro)-independent hydrolysis of activated Ala-AMP. The other activity is designated 'posttransfer' editing and involves deacylation of mischarged Ala-tRNA(Pro). The misacylated Cys-tRNA(Pro) is not edited by ProRS. In Haemophilus influenzae (strain 86-028NP), this protein is Proline--tRNA ligase.